We begin with the raw amino-acid sequence, 377 residues long: EPS I polysaccharide export outer membrane protein EpsA (377 aa).

Residues 1-23 (MFVSIPSIRKTVMSLCAVPLMAA) form the signal peptide. A lipid anchor (N-palmitoyl cysteine) is attached at cysteine 24. Cysteine 24 is lipidated: S-diacylglycerol cysteine.

The protein belongs to the BexD/CtrA/VexA family.

The protein resides in the cell outer membrane. Its function is as follows. Probably involved in polymerization and/or export of exopolysaccharide EPS I which functions as a virulence factor. This is EPS I polysaccharide export outer membrane protein EpsA (epsA) from Ralstonia solanacearum (Pseudomonas solanacearum).